We begin with the raw amino-acid sequence, 201 residues long: Adenylyl-sulfate kinase (201 aa).

35–42 (GLSGSGKS) serves as a coordination point for ATP. The active-site Phosphoserine intermediate is S109.

It belongs to the APS kinase family.

The enzyme catalyses adenosine 5'-phosphosulfate + ATP = 3'-phosphoadenylyl sulfate + ADP + H(+). The protein operates within sulfur metabolism; hydrogen sulfide biosynthesis; sulfite from sulfate: step 2/3. In terms of biological role, catalyzes the synthesis of activated sulfate. The polypeptide is Adenylyl-sulfate kinase (Salmonella arizonae (strain ATCC BAA-731 / CDC346-86 / RSK2980)).